The chain runs to 61 residues: Small ribosomal subunit protein uS14 (61 aa).

Cys-24, Cys-27, Cys-40, and Cys-43 together coordinate Zn(2+).

This sequence belongs to the universal ribosomal protein uS14 family. Zinc-binding uS14 subfamily. Part of the 30S ribosomal subunit. Contacts proteins S3 and S10. Requires Zn(2+) as cofactor.

In terms of biological role, binds 16S rRNA, required for the assembly of 30S particles and may also be responsible for determining the conformation of the 16S rRNA at the A site. The protein is Small ribosomal subunit protein uS14 of Acidithiobacillus ferrooxidans (strain ATCC 23270 / DSM 14882 / CIP 104768 / NCIMB 8455) (Ferrobacillus ferrooxidans (strain ATCC 23270)).